We begin with the raw amino-acid sequence, 106 residues long: Large ribosomal subunit protein uL24 (106 aa).

This sequence belongs to the universal ribosomal protein uL24 family. As to quaternary structure, part of the 50S ribosomal subunit.

In terms of biological role, one of two assembly initiator proteins, it binds directly to the 5'-end of the 23S rRNA, where it nucleates assembly of the 50S subunit. Its function is as follows. One of the proteins that surrounds the polypeptide exit tunnel on the outside of the subunit. The polypeptide is Large ribosomal subunit protein uL24 (Marinobacter nauticus (strain ATCC 700491 / DSM 11845 / VT8) (Marinobacter aquaeolei)).